A 250-amino-acid chain; its full sequence is Peptidyl-tRNA hydrolase (250 aa).

Residue Y14 participates in tRNA binding. H19 serves as the catalytic Proton acceptor. TRNA is bound by residues F64, N66, and N112. Positions 192 to 250 (MGDGNQRPGGVKTDPAQLEKAPPKAQSHIRQARQNQKKPNIPESGPMAEMLKKLLGKKD) are disordered. A compositionally biased stretch (polar residues) spans 219 to 229 (HIRQARQNQKK). Over residues 241-250 (MLKKLLGKKD) the composition is skewed to basic and acidic residues.

Belongs to the PTH family. In terms of assembly, monomer.

The protein resides in the cytoplasm. The enzyme catalyses an N-acyl-L-alpha-aminoacyl-tRNA + H2O = an N-acyl-L-amino acid + a tRNA + H(+). Functionally, hydrolyzes ribosome-free peptidyl-tRNAs (with 1 or more amino acids incorporated), which drop off the ribosome during protein synthesis, or as a result of ribosome stalling. Its function is as follows. Catalyzes the release of premature peptidyl moieties from peptidyl-tRNA molecules trapped in stalled 50S ribosomal subunits, and thus maintains levels of free tRNAs and 50S ribosomes. In Brucella canis (strain ATCC 23365 / NCTC 10854 / RM-666), this protein is Peptidyl-tRNA hydrolase.